The following is a 636-amino-acid chain: DNA primase (636 aa).

Residues 44 to 68 (CPFHDEKTPSFHVRPNHGHFHCFGC) form a CHC2-type zinc finger. A Toprim domain is found at 266–352 (HQAVVVEGYT…SGQSFVAVAA (87 aa)). Positions 272, 323, and 325 each coordinate Mg(2+). The span at 443–459 (REEAKGGGRKDNNRRGQ) shows a compositional bias: basic and acidic residues. The segment at 443–481 (REEAKGGGRKDNNRRGQETAARPKPPPVQRPDPTDPTLW) is disordered.

It belongs to the DnaG primase family. As to quaternary structure, monomer. Interacts with DnaB. It depends on Zn(2+) as a cofactor. Requires Mg(2+) as cofactor.

It catalyses the reaction ssDNA + n NTP = ssDNA/pppN(pN)n-1 hybrid + (n-1) diphosphate.. Functionally, RNA polymerase that catalyzes the synthesis of short RNA molecules used as primers for DNA polymerase during DNA replication. This is DNA primase from Mycolicibacterium smegmatis (strain ATCC 700084 / mc(2)155) (Mycobacterium smegmatis).